The primary structure comprises 468 residues: Heat stress transcription factor A-1e (468 aa).

A DNA-binding region spans residues Ile21–Pro115. Positions Ala133 to Val199 are hydrophobic repeat HR-A/B. A compositionally biased stretch (polar residues) spans Gln211–Ser220. 2 disordered regions span residues Gln211–Leu244 and Gln268–Thr309. The Nuclear localization signal signature appears at Asn223 to Arg227. Residues Ser277–Ser305 show a composition bias toward low complexity. Residues Asp402–Glu411 carry the AHA motif. The short motif at Leu454–Leu461 is the Nuclear export signal element.

Belongs to the HSF family. Class A subfamily. In terms of assembly, homotrimer. In terms of processing, exhibits temperature-dependent phosphorylation.

The protein resides in the cytoplasm. It localises to the nucleus. In terms of biological role, transcriptional activator that specifically binds DNA sequence 5'-AGAAnnTTCT-3' known as heat shock promoter elements (HSE). This Arabidopsis thaliana (Mouse-ear cress) protein is Heat stress transcription factor A-1e (HSFA1E).